An 89-amino-acid chain; its full sequence is Small ribosomal subunit protein uS15 (89 aa).

It belongs to the universal ribosomal protein uS15 family. Part of the 30S ribosomal subunit. Forms a bridge to the 50S subunit in the 70S ribosome, contacting the 23S rRNA.

One of the primary rRNA binding proteins, it binds directly to 16S rRNA where it helps nucleate assembly of the platform of the 30S subunit by binding and bridging several RNA helices of the 16S rRNA. In terms of biological role, forms an intersubunit bridge (bridge B4) with the 23S rRNA of the 50S subunit in the ribosome. The chain is Small ribosomal subunit protein uS15 from Thermobifida fusca (strain YX).